A 1150-amino-acid chain; its full sequence is Fl(2)d-associated complex component (1150 aa).

The segment covering 1–10 has biased composition (basic and acidic residues); that stretch reads MEKKAKESLR. 4 disordered regions span residues 1 to 444, 477 to 710, 833 to 914, and 1034 to 1053; these read MEKK…EEER, QGRE…PPPL, ASED…MDTN, and KEQG…AKIP. The span at 11 to 20 shows a compositional bias: basic residues; it reads RYKKAARHSA. Positions 21-44 are enriched in low complexity; the sequence is THSSSSDSTSDSDSGSSSYSSTDS. A compositionally biased stretch (gly residues) spans 47–69; the sequence is GVGGVGVGVGVPGGAGGPGGSGS. The span at 72 to 97 shows a compositional bias: basic residues; it reads GHPHTHGHGHHPRSAERHHRKKKSSR. Low complexity predominate over residues 98–107; sequence RGGSSSGDEP. Composition is skewed to basic residues over residues 110–144 and 162–175; these read SRRK…KKRA and AKLK…RLRA. Residues 122–147 adopt a coiled-coil conformation; that stretch reads KKLVAKRNHIKRKLKEARLKKRAAAA. The segment covering 176–199 has biased composition (basic and acidic residues); that stretch reads ASKEQRERDKLRVVQRDRERDHHR. The segment covering 202 to 215 has biased composition (low complexity); that stretch reads SSRSPPSSSTTTTT. A coiled-coil region spans residues 269-347; it reads PSLERERERE…KLRRQEEEEG (79 aa). Basic and acidic residues-rich tracts occupy residues 270 to 414, 428 to 444, and 492 to 529; these read SLER…DEMR, YAPR…EEER, and PDER…PEWE. Gly residues predominate over residues 537–558; that stretch reads AGGGPGGPSGTPGRPGGFVGGP. 2 stretches are compositionally biased toward basic and acidic residues: residues 589-611 and 630-640; these read ERER…DRPD and WLEHDQREKPR. A compositionally biased stretch (pro residues) spans 660–669; it reads PPAPSHPHPA. Residues 693 to 702 show a composition bias toward basic and acidic residues; sequence GHGDHGERPG. Over residues 851–861 the composition is skewed to low complexity; sequence QSLNLNQSLSS. Positions 879 to 889 are enriched in acidic residues; that stretch reads ELSEISDSDDD. A compositionally biased stretch (basic and acidic residues) spans 890–903; sequence ILNKTDKVRPKNEL. The segment covering 905–914 has biased composition (acidic residues); sequence TETEQEMDTN.

The protein belongs to the ZC3H13 family. In terms of assembly, component of the WMM complex, a N6-methyltransferase complex composed of a catalytic subcomplex, named MAC, and of an associated subcomplex, named MACOM. The MAC subcomplex is composed of Ime4/Mettl3 and Mettl14. The MACOM subcomplex is composed of fl(2)d, Flacc/Xio, Hakai, vir, and, in some cases of nito. As to expression, widely expressed during embryogenesis but shows enrichment in the neuroectoderm.

The protein localises to the nucleus. In terms of biological role, associated component of the WMM complex, a complex that mediates N6-methyladenosine (m6A) methylation of mRNAs, a modification that plays a role in the efficiency of mRNA splicing and is required for sex determination. In the WMM complex, acts as a key regulator of m6A methylation by bridging fl(2)d to the RNA-binding component nito. Required for sex determination and dosage compensation via Sxl alternative splicing: m6A methylation acts as a key regulator of Sxl pre-mRNA and promotes female-specific alternative splicing of Sxl, which determines female physiognomy. The chain is Fl(2)d-associated complex component from Drosophila melanogaster (Fruit fly).